The following is a 1087-amino-acid chain: MADHVQSLAQLENLCKQLYETTDTTTRLQAEKALVEFTNSPDCLSKCQLLLERGSSSYSQLLAATCLTKLVSRTNNPLPLEQRIDIRNYVLNYLATRPKLATFVTQALIQLYARITKLGWFDCQKDDYVFRNAITDVTRFLQDSVEYCIIGVTILSQLTNEINQADTTHPLTKHRKIASSFRDSSLFDIFTLSCNLLKQASGKNLNLNDESQHGLLMQLLKLTHNCLNFDFIGTSTDESSDDLCTVQIPTSWRSAFLDSSTLQLFFDLYHSIPPSFSPLVLSCLVQIASVRRSLFNNAERAKFLSHLVDGVKRILENPQSLSDPNNYHEFCRLLARLKSNYQLGELVKVENYPDVIRLIANFTVTSLQHWEFAPNSVHYLLSLWQRLAASVPYVKATEPHMLETYTPEVTKAYITSRLESVHIILRDGLEDPLEDTGLVQQQLDQLSTIGRCEYEKTCALLVQLFDQSAQSYQELLQSASASPMDIAVQEGRLTWLVYIIGAVIGGRVSFASTDEQDAMDGELVCRVLQLMNLTDSRLAQAGNEKLELAMLSFFEQFRKIYIGDQVQKSSKLYRRLSEVLGLNDETMVLSVFIGKVITNLKYWGRCEPITSKTLQLLNDLSIGYSSVRKLVKLSAVQFMLNNHTSEHFSFLGINNQSNLTDMRCRTTFYTALGRLLMVDLGEDEDQYEQFMLPLTAAFEAVAQMFSTNSFNEQEAKRTLVGLVRDLRGIAFAFNAKTSFMMLFEWIYPSYMPILQRAIELWYHDPACTTPVLKLMAELVHNRSQRLQFDVSSPNGILLFRETSKMITMYGNRILTLGEVPKDQVYALKLKGISICFSMLKAALSGSYVNFGVFRLYGDDALENALQTFIKLLLSIPHSDLLDYPKLSQSYYSLLEVLTQDHMNFIASLEPHVIMYILSSISEGLTALDTMVCTGCCSCLDHIVTYLFKQLSRSTKKRTTPLNRESDCFLHIMQQHPAMIQQMLSTVLNIIIFEDCRNQWSMSRPLLGLILLNEKYFSDLRNSIVNSQPPEKQQAMHLCFENLMEGIERNLLTKNRDRFTQNLSAFRREVNDSMKNSTYGVNSNDMMS.

Position 2 is an N-acetylalanine (alanine 2). The region spanning 30-96 (AEKALVEFTN…RNYVLNYLAT (67 aa)) is the Importin N-terminal domain. At serine 570 the chain carries Phosphoserine.

The protein belongs to the exportin family. In terms of assembly, binds to nucleoporins. Found in a complex with XPO7, EIF4A1, ARHGAP1, VPS26A, VPS29, VPS35 and SFN. Interacts with ARHGAP1 and SFN. Interacts with Ran and cargo proteins in a GTP-dependent manner. As to expression, highly expressed in testis and spleen, moderate in kidney and liver and low in heart, brain, lung and skeletal muscle.

It is found in the cytoplasm. The protein localises to the nucleus. Mediates the nuclear export of proteins (cargos) with broad substrate specificity. In the nucleus binds cooperatively to its cargo and to the GTPase Ran in its active GTP-bound form. Docking of this trimeric complex to the nuclear pore complex (NPC) is mediated through binding to nucleoporins. Upon transit of a nuclear export complex into the cytoplasm, disassembling of the complex and hydrolysis of Ran-GTP to Ran-GDP (induced by RANBP1 and RANGAP1, respectively) cause release of the cargo from the export receptor. XPO7 then return to the nuclear compartment and mediate another round of transport. The directionality of nuclear export is thought to be conferred by an asymmetric distribution of the GTP- and GDP-bound forms of Ran between the cytoplasm and nucleus. This is Exportin-7 (Xpo7) from Mus musculus (Mouse).